We begin with the raw amino-acid sequence, 176 residues long: Adenine phosphoribosyltransferase (176 aa).

It belongs to the purine/pyrimidine phosphoribosyltransferase family. Homodimer.

The protein resides in the cytoplasm. It carries out the reaction AMP + diphosphate = 5-phospho-alpha-D-ribose 1-diphosphate + adenine. Its pathway is purine metabolism; AMP biosynthesis via salvage pathway; AMP from adenine: step 1/1. Functionally, catalyzes a salvage reaction resulting in the formation of AMP, that is energically less costly than de novo synthesis. The polypeptide is Adenine phosphoribosyltransferase (Borrelia garinii subsp. bavariensis (strain ATCC BAA-2496 / DSM 23469 / PBi) (Borreliella bavariensis)).